Here is a 313-residue protein sequence, read N- to C-terminus: Thymidylate synthase (313 aa).

The segment at 1 to 28 is disordered; it reads MPVAGSELPRRPLPPAAQERDAEPRPPH. Basic and acidic residues predominate over residues 18–28; that stretch reads QERDAEPRPPH. Arg-50 contacts dUMP. The residue at position 114 (Ser-114) is a Phosphoserine. DUMP contacts are provided by residues 175–176, 195–196, 215–218, Asn-226, and 256–258; these read RR, CH, RSGD, and HIY. The active-site Nucleophile is the Cys-195. Asp-218 provides a ligand contact to (6R)-5,10-methylene-5,6,7,8-tetrahydrofolate. Residues Lys-287, Lys-292, and Lys-308 each participate in a glycyl lysine isopeptide (Lys-Gly) (interchain with G-Cter in SUMO2) cross-link. Residue Ala-312 coordinates (6R)-5,10-methylene-5,6,7,8-tetrahydrofolate.

This sequence belongs to the thymidylate synthase family. As to quaternary structure, homodimer.

The protein resides in the nucleus. It is found in the cytoplasm. Its subcellular location is the mitochondrion. The protein localises to the mitochondrion matrix. It localises to the mitochondrion inner membrane. The catalysed reaction is dUMP + (6R)-5,10-methylene-5,6,7,8-tetrahydrofolate = 7,8-dihydrofolate + dTMP. It functions in the pathway pyrimidine metabolism; dTTP biosynthesis. Its function is as follows. Catalyzes the reductive methylation of 2'-deoxyuridine 5'-monophosphate (dUMP) to thymidine 5'-monophosphate (dTMP), using the cosubstrate, 5,10- methylenetetrahydrofolate (CH2H4folate) as a 1-carbon donor and reductant and contributes to the de novo mitochondrial thymidylate biosynthesis pathway. The polypeptide is Thymidylate synthase (Homo sapiens (Human)).